A 219-amino-acid chain; its full sequence is Large ribosomal subunit protein mL67 (219 aa).

This sequence belongs to the mitochondrion-specific ribosomal protein mL67 family.

Its subcellular location is the nucleus. It localises to the mitochondrion. In terms of biological role, transcription factor involved in regulation of RNA polymerase II-dependent transcription. Also involved in regulation of mitochondrial DNA recombination, maintenance and repair, and generation of homoplasmic cells. This Kluyveromyces lactis (strain ATCC 8585 / CBS 2359 / DSM 70799 / NBRC 1267 / NRRL Y-1140 / WM37) (Yeast) protein is Large ribosomal subunit protein mL67 (MHR1).